Reading from the N-terminus, the 233-residue chain is Isoprenyl transferase (233 aa).

Residue D12 is part of the active site. Mg(2+) is bound at residue D12. Residues 13-16 (GNGR), W17, R25, H29, and 57-59 (STE) each bind substrate. Catalysis depends on N60, which acts as the Proton acceptor. Substrate-binding positions include W61, R63, R178, and 184-186 (RLS). E197 contributes to the Mg(2+) binding site.

It belongs to the UPP synthase family. In terms of assembly, homodimer. It depends on Mg(2+) as a cofactor.

Functionally, catalyzes the condensation of isopentenyl diphosphate (IPP) with allylic pyrophosphates generating different type of terpenoids. The chain is Isoprenyl transferase from Thermotoga maritima (strain ATCC 43589 / DSM 3109 / JCM 10099 / NBRC 100826 / MSB8).